Consider the following 333-residue polypeptide: uncharacterized protein (333 aa).

Residues 234 to 333 (PPLAPTSAPA…GLSSEFDSDD (100 aa)) form a disordered region. Residues 251–265 (VPPPVPAPPTPPPQE) show a composition bias toward pro residues. Residues 324–333 (GLSSEFDSDD) are compositionally biased toward polar residues.

The protein resides in the cell projection. It localises to the cilium. The protein localises to the flagellum. This is an uncharacterized protein from Homo sapiens (Human).